Here is a 513-residue protein sequence, read N- to C-terminus: Histone acetyltransferase KAT5 (513 aa).

In terms of domain architecture, Tudor-knot spans 8–65 (IEGCRLPVLRRNQDNEDEWPLAEILSVKDISGRKLFYVHYIDFNKRLDEWVTHERLDL). Lysine 52 is modified (N6-acetyllysine). Positions 69 to 106 (QFPKKEAKTPTKNGLPGSRPGSPEREVPASAQASGKTL) are disordered. At serine 86 the chain carries Phosphoserine; by GSK3. Serine 90 carries the post-translational modification Phosphoserine; by CDK1 and CDK9. N6-acetyllysine; by autocatalysis is present on residues lysine 104 and lysine 120. The disordered stretch occupies residues 122 to 220 (REAIPGGEPD…RMTGSLVSDR (99 aa)). Residues 133-144 (PLSSSSCLQPNH) are compositionally biased toward polar residues. 4 positions are modified to N6-acetyllysine; by autocatalysis: lysine 148, lysine 150, lysine 187, and lysine 189. The residue at position 199 (serine 199) is a Phosphoserine. Positions 227–504 (TRMKNIECIE…IDSKCLHFTP (278 aa)) constitute an MYST-type HAT domain. The C2HC MYST-type zinc finger occupies 260–285 (LYLCEFCLKYGRSLKCLQRHLTKCDL). An N6-acetyllysine; by autocatalysis modification is found at lysine 327. The interval 368–513 (ACILTLPPYQ…PKDWSKRGKW (146 aa)) is interaction with ATF2. Acetyl-CoA is bound by residues 370–372 (ILT) and 377–383 (QRRGYGK). The active-site Proton donor/acceptor is the glutamate 403. Acetyl-CoA contacts are provided by serine 407 and serine 416. Residue lysine 430 forms a Glycyl lysine isopeptide (Lys-Gly) (interchain with G-Cter in SUMO1); alternate linkage. A Glycyl lysine isopeptide (Lys-Gly) (interchain with G-Cter in SUMO2); alternate cross-link involves residue lysine 430. A Glycyl lysine isopeptide (Lys-Gly) (interchain with G-Cter in SUMO1) cross-link involves residue lysine 451.

It belongs to the MYST (SAS/MOZ) family. As to quaternary structure, component of the NuA4 histone acetyltransferase complex which contains the catalytic subunit KAT5/TIP60 and the subunits EP400, TRRAP/PAF400, BRD8/SMAP, EPC1, DMAP1/DNMAP1, RUVBL1/TIP49, RUVBL2, ING3, actin, ACTL6A/BAF53A, MORF4L1/MRG15, MORF4L2/MRGX, MRGBP, YEATS4/GAS41, VPS72/YL1 and MEAF6. KAT5/TIP60, EPC1, and ING3 together constitute a minimal HAT complex termed Piccolo NuA4. The NuA4 complex interacts with MYC. Interacts with ATM. Interacts with JADE1. Interacts with PLA2G4A/CPLA2, EDNRA and HDAC7. Interacts with the cytoplasmic tail of APP and APBB1/FE65. Interacts with TRIM24 and TRIM68. Forms a complex with SENP6 and UBE2I in response to UV irradiation. Identified in a complex with HINT1. Interacts with ATF2 and CUL3. Interacts with NR1D2 (via N-terminus). Component of a SWR1-like complex. Interacts with FOXP3. Interacts with ZBTB49. Interacts with SRF. Interacts with ATF3; promoting autoacetylation and deubiquitination by USP7. Interacts with EP300/p300; interaction promotes KAT5 autoacetylation. Interacts with PRKDC; interaction is impaired following KAT5 sumoylation. Interacts with GPR50. Interacts with NME3; this interaction enables recruitment of NME3 at DNA damage sites where it plays a role in the repair of DNA. (Microbial infection) Interacts with HIV-1 TAT. Post-translationally, phosphorylated on Ser-86 and Ser-90; enhanced during G2/M phase. The phosphorylated form has a higher activity. Phosphorylation at Ser-90 by CDK1 or CDK9 is a prerequisite for phosphorylation at Ser-86 by GSK3. Phosphorylation at Ser-86 by GSK3 (GSK3A or GSK3B) activates acetyltransferase and acyltransferase activities. Phosphorylation at Ser-90 by CDK9 promotes KAT5 recruitment to chromatin. Phosphorylation by VRK1 following DNA damage promotes KAT5 association with chromatin and histone acetyltransferase activity. In terms of processing, autoacetylated. Autoacetylation is required for histone acetyltransferase activity. Autoacetylation at Lys-327 is facilitated by interaction with EP300/p300: it prevents ubiquitination and subsequent degradation by the proteasome and promotes acetylation of target proteins. Deacetylated by HDAC3 and SIRT1. Deacetylation by HDAC3 promotes its ubiquitination and cytoplasmic localization. Sumoylated by UBE2I at Lys-430 and Lys-451, leading to increase of its histone acetyltransferase activity in UV-induced DNA damage response, as well as its translocation to nuclear bodies. Sumoylation with SUMO2 by PIAS4 at Lys-430 promotes repair of DNA double-strand breaks (DSBs) via homologous recombination (HR). Sumoylation by PIAS4 impairs interaction with PRKDC, inhibiting non-homologous end joining (NHEJ)-mediated repair of DSBs, thereby facilitating HR. Desumoylated by SENP3. Post-translationally, ubiquitinated by MDM2, leading to its proteasome-dependent degradation. Ubiquitination is prevented by autoacetylation at Lys-327. Ubiquitinated following deacetylation by HDAC3, leading to cytoplasmic localization. Deubiquitinated by USP7 following interaction with ATF3, promoting its stabilization. In terms of processing, (Microbial infection) In case of HIV-1 infection, interaction with the viral Tat protein leads to KAT5 polyubiquitination and targets it to degradation.

The protein resides in the nucleus. It is found in the chromosome. Its subcellular location is the cytoplasm. The protein localises to the centromere. It localises to the kinetochore. The protein resides in the cytoskeleton. It is found in the spindle pole. Its subcellular location is the nucleolus. The protein localises to the perinuclear region. The catalysed reaction is L-lysyl-[histone] + acetyl-CoA = N(6)-acetyl-L-lysyl-[histone] + CoA + H(+). The enzyme catalyses L-lysyl-[protein] + acetyl-CoA = N(6)-acetyl-L-lysyl-[protein] + CoA + H(+). It carries out the reaction (2E)-butenoyl-CoA + L-lysyl-[protein] = N(6)-(2E)-butenoyl-L-lysyl-[protein] + CoA + H(+). It catalyses the reaction 2-hydroxyisobutanoyl-CoA + L-lysyl-[protein] = N(6)-(2-hydroxyisobutanoyl)-L-lysyl-[protein] + CoA + H(+). The catalysed reaction is (S)-lactoyl-CoA + L-lysyl-[protein] = N(6)-[(S)-lactoyl]-L-lysyl-[protein] + CoA + H(+). Its activity is regulated as follows. Acyltransferase and acetyltransferase activities are activated by phosphorylation and autoacetylation. Autoacetylation activates the histone acetyltransferase activity. Catalytic subunit of the NuA4 histone acetyltransferase complex, a multiprotein complex involved in transcriptional activation of select genes principally by acetylation of nucleosomal histones H2A and H4. Histone acetylation alters nucleosome-DNA interactions and promotes interaction of the modified histones with other proteins which positively regulate transcription. The NuA4 histone acetyltransferase complex is required for the activation of transcriptional programs associated with proto-oncogene mediated growth induction, tumor suppressor mediated growth arrest and replicative senescence, apoptosis, and DNA repair. The NuA4 complex plays a direct role in repair of DNA double-strand breaks (DSBs) by promoting homologous recombination (HR): the complex inhibits TP53BP1 binding to chromatin via MBTD1, which recognizes and binds histone H4 trimethylated at 'Lys-20' (H4K20me), and KAT5 that catalyzes acetylation of 'Lys-15' of histone H2A (H2AK15ac), thereby blocking the ubiquitination mark required for TP53BP1 localization at DNA breaks. Also involved in DSB repair by mediating acetylation of 'Lys-5' of histone H2AX (H2AXK5ac), promoting NBN/NBS1 assembly at the sites of DNA damage. The NuA4 complex plays a key role in hematopoietic stem cell maintenance and is required to maintain acetylated H2A.Z/H2AZ1 at MYC target genes. The NuA4 complex is also required for spermatid development by promoting acetylation of histones: histone hyperacetylation is required for histone replacement during the transition from round to elongating spermatids. Component of a SWR1-like complex that specifically mediates the removal of histone H2A.Z/H2AZ1 from the nucleosome. Also acetylates non-histone proteins, such as BMAL1, ATM, AURKB, CHKA, CGAS, ERCC4/XPF, LPIN1, TP53/p53, NDC80/HEC1, NR1D2, RAN, SOX4, FOXP3, SQSTM1, ULK1 and RUBCNL/Pacer. Directly acetylates and activates ATM. Promotes nucleotide excision repair (NER) by mediating acetylation of ERCC4/XPF, thereby promoting formation of the ERCC4-ERCC1 complex. Relieves NR1D2-mediated inhibition of APOC3 expression by acetylating NR1D2. Acts as a regulator of regulatory T-cells (Treg) by catalyzing FOXP3 acetylation, thereby promoting FOXP3 transcriptional repressor activity. Involved in skeletal myoblast differentiation by mediating acetylation of SOX4. Catalyzes acetylation of APBB1/FE65, increasing its transcription activator activity. Promotes transcription elongation during the activation phase of the circadian cycle by catalyzing acetylation of BMAL1, promoting elongation of circadian transcripts. Together with GSK3 (GSK3A or GSK3B), acts as a regulator of autophagy: phosphorylated at Ser-86 by GSK3 under starvation conditions, leading to activate acetyltransferase activity and promote acetylation of key autophagy regulators, such as ULK1 and RUBCNL/Pacer. Acts as a regulator of the cGAS-STING innate antiviral response by catalyzing acetylation the N-terminus of CGAS, thereby promoting CGAS DNA-binding and activation. Also regulates lipid metabolism by mediating acetylation of CHKA or LPIN1. Promotes lipolysis of lipid droplets following glucose deprivation by mediating acetylation of isoform 1 of CHKA, thereby promoting monomerization of CHKA and its conversion into a tyrosine-protein kinase. Acts as a regulator of fatty-acid-induced triacylglycerol synthesis by catalyzing acetylation of LPIN1, thereby promoting the synthesis of diacylglycerol. In addition to protein acetyltransferase, can use different acyl-CoA substrates, such as (2E)-butenoyl-CoA (crotonyl-CoA), S-lactoyl-CoA (lactyl-CoA) and 2-hydroxyisobutanoyl-CoA (2-hydroxyisobutyryl-CoA), and is able to mediate protein crotonylation, lactylation and 2-hydroxyisobutyrylation, respectively. Acts as a key regulator of chromosome segregation and kinetochore-microtubule attachment during mitosis by mediating acetylation or crotonylation of target proteins. Catalyzes acetylation of AURKB at kinetochores, increasing AURKB activity and promoting accurate chromosome segregation in mitosis. Acetylates RAN during mitosis, promoting microtubule assembly at mitotic chromosomes. Acetylates NDC80/HEC1 during mitosis, promoting robust kinetochore-microtubule attachment. Catalyzes crotonylation of MAPRE1/EB1, thereby ensuring accurate spindle positioning in mitosis. Catalyzes lactylation of NBN/NBS1 in response to DNA damage, thereby promoting DNA double-strand breaks (DSBs) via homologous recombination (HR). Its function is as follows. (Microbial infection) Catalyzes the acetylation of flavivirus NS3 protein to modulate their RNA-binding and -unwinding activities leading to facilitate viral replication. The sequence is that of Histone acetyltransferase KAT5 from Homo sapiens (Human).